The primary structure comprises 310 residues: Olfactory receptor 5P54 (310 aa).

Topologically, residues 1 to 25 (MNGGNHTSMTELFILGPTEDPTFCI) are extracellular. The N-linked (GlcNAc...) asparagine glycan is linked to Asn5. The helical transmembrane segment at 26–46 (AFFVIFLGVYMVTLVGNISII) threads the bilayer. The Cytoplasmic segment spans residues 47-54 (TLIRISSQ). The helical transmembrane segment at 55–75 (LHTPVYLFLNHLAFVDILYST) threads the bilayer. At 76 to 99 (LVSVIMLMELLEHELALPVAACAA) the chain is on the extracellular side. Cys97 and Cys189 are joined by a disulfide. Residues 100-120 (ELCITVLFGSSECFLLAAMAY) traverse the membrane as a helical segment. At 121 to 133 (DCYVAICSPLLYS) the chain is on the cytoplasmic side. Residues 134-154 (TLMSSRVCFLLLGMSYVGGCM) form a helical membrane-spanning segment. At 155–196 (NGWIFTGCLLNLSFYGPYQIDHFFCDFSPLLKLSCSDVSIIG) the chain is on the extracellular side. Asn165 is a glycosylation site (N-linked (GlcNAc...) asparagine). A helical membrane pass occupies residues 197–217 (IIPSISSGSIIVVTVLVIAVF). At 218-237 (YICILMTILKMHSTDGCHKA) the chain is on the cytoplasmic side. Residues 238–258 (FSTCNSYLTAVTLYYGTITFI) traverse the membrane as a helical segment. The Extracellular portion of the chain corresponds to 259–271 (YVMPKSNYSTEKN). N-linked (GlcNAc...) asparagine glycosylation occurs at Asn265. The chain crosses the membrane as a helical span at residues 272 to 292 (KVLSEFYTVVIPMLNHLIYSL). Over 293–310 (KNRDVKDALRKAIVRVYT) the chain is Cytoplasmic.

It belongs to the G-protein coupled receptor 1 family.

The protein localises to the cell membrane. Its function is as follows. Potential odorant receptor. This Mus musculus (Mouse) protein is Olfactory receptor 5P54.